The following is a 201-amino-acid chain: Transmembrane 4 L6 family member 18 (201 aa).

At 1 to 9 (MGSRKCGGC) the chain is on the cytoplasmic side. Residues 10-30 (LSCLLIPLALWSIIVNILLYF) traverse the membrane as a helical segment. Over 31 to 49 (PNGQTSYASSNKLTNYVWY) the chain is Extracellular. Residues 50-70 (FEGICFSGIMMLIVTTVLLVL) form a helical membrane-spanning segment. Over 71 to 93 (ENNNNYKCCQSENCSKKYVTLLS) the chain is Cytoplasmic. The chain crosses the membrane as a helical span at residues 94–114 (IIFSSLGIAFSGYCLVISALG). Over 115-157 (LVQGPYCRTLDGWEYAFEGTAGRFLTDSSIWIQCLEPAHVVEW) the chain is Extracellular. A helical membrane pass occupies residues 158–178 (NIILFSILITLSGLQVIICLI). Residues 179-201 (RVVMQLSKILCGSYSVIFQPGII) are Cytoplasmic-facing.

The protein belongs to the L6 tetraspanin family.

The protein localises to the membrane. The chain is Transmembrane 4 L6 family member 18 (TM4SF18) from Homo sapiens (Human).